A 90-amino-acid polypeptide reads, in one-letter code: Small ribosomal subunit protein uS15c (90 aa).

It belongs to the universal ribosomal protein uS15 family. In terms of assembly, part of the 30S ribosomal subunit.

The protein resides in the plastid. It localises to the chloroplast. The chain is Small ribosomal subunit protein uS15c (rps15-A) from Hordeum vulgare (Barley).